Reading from the N-terminus, the 993-residue chain is P3N-PIPO polyprotein (993 aa).

One can recognise a Peptidase S30 domain in the interval Gly-154 to Tyr-298. Active-site for P1 proteinase activity residues include His-207, Asp-216, and Ser-249. Residues Lys-349–Cys-352 carry the Involved in interaction with stylet and aphid transmission motif. Positions Pro-607–Lys-609 match the Involved in virions binding and aphid transmission motif. Positions Met-633–Gly-755 constitute a Peptidase C6 domain. Residues Cys-641 and His-714 each act as for helper component proteinase activity in the active site.

This sequence belongs to the potyviridae P3N-PIPO polyprotein family. In terms of assembly, interacts (via PIPO domain) with host PCaP1 protein; this interaction may help to anchor the movement complex to the plasma membrane from which the complex could move to the plasmodesmata. Potyviral RNA is expressed as two polyproteins which undergo post-translational proteolytic processing. Genome polyprotein is processed by NIa-pro, P1 and HC-pro proteinases resulting in the production of at least ten individual proteins. P3N-PIPO is cleaved by P1 and HC-pro proteinases resulting in the production of three individual proteins. The P1 proteinase and the HC-pro cleave only their respective C-termini autocatalytically.

It is found in the host cell junction. Its subcellular location is the host plasmodesma. It catalyses the reaction Hydrolyzes a Gly-|-Gly bond at its own C-terminus, commonly in the sequence -Tyr-Xaa-Val-Gly-|-Gly, in the processing of the potyviral polyprotein.. In terms of biological role, required for aphid transmission and also has proteolytic activity. Only cleaves a Gly-Gly dipeptide at its own C-terminus. Interacts with virions and aphid stylets. Acts as a suppressor of RNA-mediated gene silencing, also known as post-transcriptional gene silencing (PTGS), a mechanism of plant viral defense that limits the accumulation of viral RNAs. May have RNA-binding activity. Its function is as follows. Allows efficient cell to cell propagation, by bypassing the host cell wall barrier. Transports viral genome to neighboring plant cells directly through plasmosdesmata, without any budding. This is P3N-PIPO polyprotein from Solanum betaceum (Tamarillo).